Reading from the N-terminus, the 84-residue chain is Beta-defensin 119 (84 aa).

An N-terminal signal peptide occupies residues 1 to 21 (MKLLYLFLAILLAIEEPVISG). 2 cysteine pairs are disulfide-bonded: Cys35–Cys49 and Cys39–Cys56.

This sequence belongs to the beta-defensin family.

Its subcellular location is the secreted. Has antibacterial activity. In Pan troglodytes (Chimpanzee), this protein is Beta-defensin 119 (DEFB119).